Reading from the N-terminus, the 205-residue chain is Histone H1, early embryonic (205 aa).

2 disordered regions span residues 1–21 (MAEKNSSKKVTTKKPAAHPPA) and 94–205 (AKAQ…AKSK). Residues 17–91 (AHPPAAEMVA…GASGSFKVNV (75 aa)) form the H15 domain. Residues 98–124 (ASEKAKKEKEKAKLLAQREKAKEKGCS) show a composition bias toward basic and acidic residues. Composition is skewed to basic residues over residues 135 to 150 (PKKVKAAPKKAKKPVK) and 157 to 205 (EKKK…AKSK).

Belongs to the histone H1/H5 family.

The protein resides in the nucleus. It is found in the chromosome. In terms of biological role, histones H1 are necessary for the condensation of nucleosome chains into higher-order structures. The protein is Histone H1, early embryonic of Strongylocentrotus purpuratus (Purple sea urchin).